A 530-amino-acid polypeptide reads, in one-letter code: uncharacterized protein (530 aa).

Polar residues-rich tracts occupy residues 60–74 and 92–103; these read LNESSLRSQQESSTP and GQGTSRPLPTLS. 2 disordered regions span residues 60–103 and 121–155; these read LNES…PTLS and ASSTNEPQELPDPRDAPREGSFRLDGNQSEFGLGN. Basic and acidic residues predominate over residues 131 to 142; the sequence is PDPRDAPREGSF.

This is an uncharacterized protein from Mus musculus (Mouse).